Reading from the N-terminus, the 624-residue chain is uncharacterized protein (624 aa).

The disordered stretch occupies residues 113-249; it reads SINVRTSATT…RFHPVTDINK (137 aa). Residues 118–225 show a composition bias toward low complexity; sequence TSATTTESTN…ATTTESTNAS (108 aa). The segment covering 226–249 has biased composition (basic and acidic residues); the sequence is AKEDANKDGNAEDNRFHPVTDINK.

This is an uncharacterized protein from Saccharomyces cerevisiae (strain ATCC 204508 / S288c) (Baker's yeast).